Here is a 295-residue protein sequence, read N- to C-terminus: Pyridoxal 5'-phosphate synthase subunit PdxS (295 aa).

Asp25 is a binding site for D-ribose 5-phosphate. Lys82 acts as the Schiff-base intermediate with D-ribose 5-phosphate in catalysis. Gly154 is a binding site for D-ribose 5-phosphate. Arg166 serves as a coordination point for D-glyceraldehyde 3-phosphate. Residues Gly215 and 236 to 237 contribute to the D-ribose 5-phosphate site; that span reads GS.

The protein belongs to the PdxS/SNZ family. As to quaternary structure, in the presence of PdxT, forms a dodecamer of heterodimers.

The catalysed reaction is aldehydo-D-ribose 5-phosphate + D-glyceraldehyde 3-phosphate + L-glutamine = pyridoxal 5'-phosphate + L-glutamate + phosphate + 3 H2O + H(+). It participates in cofactor biosynthesis; pyridoxal 5'-phosphate biosynthesis. Catalyzes the formation of pyridoxal 5'-phosphate from ribose 5-phosphate (RBP), glyceraldehyde 3-phosphate (G3P) and ammonia. The ammonia is provided by the PdxT subunit. Can also use ribulose 5-phosphate and dihydroxyacetone phosphate as substrates, resulting from enzyme-catalyzed isomerization of RBP and G3P, respectively. The protein is Pyridoxal 5'-phosphate synthase subunit PdxS of Bacillus anthracis (strain A0248).